The following is a 296-amino-acid chain: Enoyl-CoA hydratase domain-containing protein 2, mitochondrial (296 aa).

Residues 1-17 (MLRVLPRALRLPCSWRF) constitute a mitochondrion transit peptide. N6-acetyllysine; alternate is present on Lys101. Lys101 is subject to N6-succinyllysine; alternate.

The protein belongs to the enoyl-CoA hydratase/isomerase family.

Its subcellular location is the mitochondrion. The sequence is that of Enoyl-CoA hydratase domain-containing protein 2, mitochondrial (Echdc2) from Mus musculus (Mouse).